The sequence spans 273 residues: Probable cysteine-rich repeat secretory protein 6 (273 aa).

An N-terminal signal peptide occupies residues 1-21 (MTRIIDVSLFCFFLFSLGAMS). 2 consecutive Gnk2-homologous domains span residues 22–122 (QPSQ…DNSF) and 128–241 (DSPA…ISAL).

The protein belongs to the cysteine-rich repeat secretory protein family.

The protein resides in the secreted. The protein is Probable cysteine-rich repeat secretory protein 6 (CRRSP6) of Arabidopsis thaliana (Mouse-ear cress).